We begin with the raw amino-acid sequence, 102 residues long: Putative ribosomal protein uL13-like (102 aa).

Belongs to the universal ribosomal protein uL13 family.

The polypeptide is Putative ribosomal protein uL13-like (RPL13AP3) (Homo sapiens (Human)).